The chain runs to 82 residues: Defensin-like protein 75 (82 aa).

The signal sequence occupies residues 1–26; it reads MAKIKSLDVITVAIILLLVIADQATA. Intrachain disulfides connect cysteine 33-cysteine 66, cysteine 37-cysteine 55, cysteine 41-cysteine 64, and cysteine 45-cysteine 65.

The protein belongs to the DEFL family.

It localises to the secreted. In Arabidopsis thaliana (Mouse-ear cress), this protein is Defensin-like protein 75 (LCR45).